A 162-amino-acid polypeptide reads, in one-letter code: Catabolic 3-dehydroquinase (162 aa).

The Proton acceptor role is filled by Tyr24. Substrate contacts are provided by Asn88, His94, and Asp101. The active-site Proton donor is the His114. Substrate is bound by residues 115-116 (VS) and Arg125.

Belongs to the type-II 3-dehydroquinase family. In terms of assembly, homododecamer. Adopts a ring-like structure, composed of an arrangement of two hexameric rings stacked on top of one another.

The catalysed reaction is 3-dehydroquinate = 3-dehydroshikimate + H2O. It participates in aromatic compound metabolism; 3,4-dihydroxybenzoate biosynthesis; 3,4-dihydroxybenzoate from 3-dehydroquinate: step 1/2. In terms of biological role, is involved in the catabolism of quinate. Allows the utilization of quinate as carbon source via the beta-ketoadipate pathway. This Podospora anserina (strain S / ATCC MYA-4624 / DSM 980 / FGSC 10383) (Pleurage anserina) protein is Catabolic 3-dehydroquinase.